Here is a 237-residue protein sequence, read N- to C-terminus: Flagellar L-ring protein (237 aa).

Positions 1–16 are cleaved as a signal peptide; that stretch reads MIKRSAVVLMAVILTG. Cysteine 17 carries N-palmitoyl cysteine lipidation. A lipid anchor (S-diacylglycerol cysteine) is attached at cysteine 17. Positions 122–143 are disordered; the sequence is PPDSSGDMSTDSNSSSDGKGSV. Over residues 124 to 140 the composition is skewed to low complexity; it reads DSSGDMSTDSNSSSDGK.

This sequence belongs to the FlgH family. The basal body constitutes a major portion of the flagellar organelle and consists of four rings (L,P,S, and M) mounted on a central rod.

The protein resides in the cell outer membrane. Its subcellular location is the bacterial flagellum basal body. Functionally, assembles around the rod to form the L-ring and probably protects the motor/basal body from shearing forces during rotation. The polypeptide is Flagellar L-ring protein (Allorhizobium ampelinum (strain ATCC BAA-846 / DSM 112012 / S4) (Agrobacterium vitis (strain S4))).